The following is a 521-amino-acid chain: Matrix metalloproteinase-A (521 aa).

An N-terminal signal peptide occupies residues 1-21; it reads MFTGLHDILIILFLLVTLKIA. The propeptide at 22–95 is activation peptide; it reads QNVDHTKFLQ…EDHQKSRGKR (74 aa). A Cysteine switch motif is present at residues 78–85; the sequence is PRCGHPDV. A Zn(2+)-binding site is contributed by cysteine 80. At 96-500 the chain is on the extracellular side; sequence YAPPQFKWKE…FCPRNEKLVL (405 aa). Asparagine 199 is a glycosylation site (N-linked (GlcNAc...) asparagine). Histidine 215 lines the Zn(2+) pocket. Glutamate 216 is a catalytic residue. The Zn(2+) site is built by histidine 219 and histidine 225. The disordered stretch occupies residues 259–298; the sequence is KASKKENEEEERKTENEDKRRKTEKDRGRTREHESDDIRP. Over residues 261–298 the composition is skewed to basic and acidic residues; that stretch reads SKKENEEEERKTENEDKRRKTEKDRGRTREHESDDIRP. Hemopexin repeat units follow at residues 300-347, 391-443, and 444-492; these read ECRV…FPGL, EKYV…WARV, and PKGV…FGFC. An N-linked (GlcNAc...) asparagine glycan is attached at asparagine 469. A helical membrane pass occupies residues 501-521; that stretch reads NSSSSHFSLIYATITILILIF.

The protein belongs to the peptidase M10A family. Requires Zn(2+) as cofactor. As to expression, expressed in the anchor cell. Expressed in the anchor cell throughout the L3 and the early L4 stage, but not in vulva precursor cells P6.p, P6.px, or P6.pxx. Expression in P6.pxxx cells begins in late-L4 stage. During L4 lethargus, expressed in all four vulE cells, but not in vulF cells. The expression in vulE cells persists in adulthood. In males, expressed in the linker cell (LC) from the early L4 stage until LC death during the L4-to-adult molt.

It localises to the cell membrane. Its subcellular location is the basolateral cell membrane. In terms of biological role, metalloprotease which, together with cadherin cdh-3 and hemicentin him-4, plays a role in anchor cell (AC) invasion during postembryonic vulval development probably by promoting the degradation of the basement membrane separating the gonad from the vulva epithelium. The chain is Matrix metalloproteinase-A from Caenorhabditis elegans.